The following is a 70-amino-acid chain: Delta-hexatoxin-Mg1b (70 aa).

Positions 1–26 (MKILEKALLENDSAAEEESRNLRTKR) are cleaved as a signal peptide. 4 disulfides stabilise this stretch: C27/C41, C34/C46, C40/C57, and C42/C68.

As to expression, expressed by the venom gland.

The protein resides in the secreted. Its function is as follows. Inhibits tetrodotoxin-sensitive sodium channels (Nav). Intracranial injection into mice causes strong convulsions and death. Intrathorax injection into crickets causes paralysis prolonged for 2 minutes, followed by recovery. The polypeptide is Delta-hexatoxin-Mg1b (Macrothele gigas (Japanese funnel web spider)).